A 156-amino-acid polypeptide reads, in one-letter code: MPRRRVVGQRKILPDPKFHSELLAKFINVIMQDGKKSTAEKIIYKALDVIAEKKGANHLDVLEAALDNVRPSVEVKSRRVGGSTYQVPCEVRPVRRNALAMRWLVEAARKRGEKSMALRLAGEMLDASENKGTAVKKREDVHRMAEANKAFAHYRW.

Belongs to the universal ribosomal protein uS7 family. Part of the 30S ribosomal subunit. Contacts proteins S9 and S11.

Its function is as follows. One of the primary rRNA binding proteins, it binds directly to 16S rRNA where it nucleates assembly of the head domain of the 30S subunit. Is located at the subunit interface close to the decoding center, probably blocks exit of the E-site tRNA. This chain is Small ribosomal subunit protein uS7, found in Shewanella sp. (strain ANA-3).